The following is a 197-amino-acid chain: Sec-independent protein translocase protein TatB (197 aa).

The chain crosses the membrane as a helical span at residues 1-21 (MFDIGFGELLLVMVLGLIVLG). Residues 93–197 (KRGYTETPSP…ASARQPSDSR (105 aa)) are disordered. Basic and acidic residues-rich tracts occupy residues 104–113 (KSDDPKKSGD) and 160–169 (NHNDGRHATS). Positions 180 to 197 (PEQSQPSAASARQPSDSR) are enriched in low complexity.

The protein belongs to the TatB family. In terms of assembly, the Tat system comprises two distinct complexes: a TatABC complex, containing multiple copies of TatA, TatB and TatC subunits, and a separate TatA complex, containing only TatA subunits. Substrates initially bind to the TatABC complex, which probably triggers association of the separate TatA complex to form the active translocon.

The protein localises to the cell inner membrane. In terms of biological role, part of the twin-arginine translocation (Tat) system that transports large folded proteins containing a characteristic twin-arginine motif in their signal peptide across membranes. Together with TatC, TatB is part of a receptor directly interacting with Tat signal peptides. TatB may form an oligomeric binding site that transiently accommodates folded Tat precursor proteins before their translocation. The sequence is that of Sec-independent protein translocase protein TatB from Pectobacterium atrosepticum (strain SCRI 1043 / ATCC BAA-672) (Erwinia carotovora subsp. atroseptica).